The following is a 1460-amino-acid chain: Nonribosomal peptide synthetase 6 (1460 aa).

The tract at residues 63–468 (EQAALHPEKI…GRQDQQVKLR (406 aa)) is adenylation. Residues 600–675 (EPTTEMEIKL…AMATKIKPLS (76 aa)) enclose the Carrier 1 domain. Ser-636 is modified (O-(pantetheine 4'-phosphoryl)serine). The tract at residues 712 to 1135 (VQDVYPCTPL…AVLDPSEAQD (424 aa)) is condensation. 2 consecutive Carrier domains span residues 1168–1241 (SPNE…GNEK) and 1236–1312 (SIGN…EETD). Residues Ser-1202 and Ser-1273 each carry the O-(pantetheine 4'-phosphoryl)serine modification. The segment at 1303-1324 (ELASSAEETDSPQTETNSNAPY) is disordered. The span at 1313–1322 (SPQTETNSNA) shows a compositional bias: polar residues.

It belongs to the NRP synthetase family.

It participates in siderophore biosynthesis. In terms of biological role, NRPS involved in extracellular coprogen-type siderophores biosynthesis. The role of extracellular siderophores in fungal virulence to plants is to supply iron to the fungus during plant infection, but not to act as phytotoxins, depriving their hosts of iron. In Alternaria brassicicola (Dark leaf spot agent), this protein is Nonribosomal peptide synthetase 6.